Here is a 1138-residue protein sequence, read N- to C-terminus: Pesticidal crystal protein Cry7Ab (1138 aa).

It belongs to the delta endotoxin family.

Its function is as follows. Promotes colloidosmotic lysis by binding to the midgut epithelial cells of Coleoptera. The polypeptide is Pesticidal crystal protein Cry7Ab (cry7Ab) (Bacillus thuringiensis subsp. dakota).